A 421-amino-acid polypeptide reads, in one-letter code: 3-isopropylmalate dehydratase large subunit (421 aa).

Positions 300, 360, and 363 each coordinate [4Fe-4S] cluster.

This sequence belongs to the aconitase/IPM isomerase family. LeuC type 2 subfamily. In terms of assembly, heterodimer of LeuC and LeuD. It depends on [4Fe-4S] cluster as a cofactor.

The catalysed reaction is (2R,3S)-3-isopropylmalate = (2S)-2-isopropylmalate. Its pathway is amino-acid biosynthesis; L-leucine biosynthesis; L-leucine from 3-methyl-2-oxobutanoate: step 2/4. In terms of biological role, catalyzes the isomerization between 2-isopropylmalate and 3-isopropylmalate, via the formation of 2-isopropylmaleate. The chain is 3-isopropylmalate dehydratase large subunit from Thermodesulfovibrio yellowstonii (strain ATCC 51303 / DSM 11347 / YP87).